A 236-amino-acid chain; its full sequence is Small ribosomal subunit protein uS2c (236 aa).

The protein belongs to the universal ribosomal protein uS2 family.

It localises to the plastid. Its subcellular location is the chloroplast. The chain is Small ribosomal subunit protein uS2c (rps2) from Ceratophyllum demersum (Rigid hornwort).